Here is a 301-residue protein sequence, read N- to C-terminus: tRNA uridine(34) hydroxylase (301 aa).

A Rhodanese domain is found at 121 to 215 (RSDDVVLIDT…YLEEVPAENS (95 aa)). Catalysis depends on Cys175, which acts as the Cysteine persulfide intermediate.

The protein belongs to the TrhO family.

It carries out the reaction uridine(34) in tRNA + AH2 + O2 = 5-hydroxyuridine(34) in tRNA + A + H2O. In terms of biological role, catalyzes oxygen-dependent 5-hydroxyuridine (ho5U) modification at position 34 in tRNAs. This is tRNA uridine(34) hydroxylase from Ruegeria pomeroyi (strain ATCC 700808 / DSM 15171 / DSS-3) (Silicibacter pomeroyi).